Here is a 121-residue protein sequence, read N- to C-terminus: Flagellar hook-basal body complex protein FliE (121 aa).

This sequence belongs to the FliE family.

It localises to the bacterial flagellum basal body. In Treponema denticola (strain ATCC 35405 / DSM 14222 / CIP 103919 / JCM 8153 / KCTC 15104), this protein is Flagellar hook-basal body complex protein FliE.